The chain runs to 503 residues: Probable cytosol aminopeptidase (503 aa).

Mn(2+)-binding residues include K274 and D279. K286 is an active-site residue. Mn(2+) is bound by residues D297, D356, and E358. R360 is an active-site residue.

Belongs to the peptidase M17 family. Mn(2+) is required as a cofactor.

It is found in the cytoplasm. The catalysed reaction is Release of an N-terminal amino acid, Xaa-|-Yaa-, in which Xaa is preferably Leu, but may be other amino acids including Pro although not Arg or Lys, and Yaa may be Pro. Amino acid amides and methyl esters are also readily hydrolyzed, but rates on arylamides are exceedingly low.. It catalyses the reaction Release of an N-terminal amino acid, preferentially leucine, but not glutamic or aspartic acids.. Its function is as follows. Presumably involved in the processing and regular turnover of intracellular proteins. Catalyzes the removal of unsubstituted N-terminal amino acids from various peptides. The protein is Probable cytosol aminopeptidase of Burkholderia ambifaria (strain MC40-6).